Here is a 169-residue protein sequence, read N- to C-terminus: General odorant-binding protein 57a (169 aa).

Positions 1–20 (MFNTRLAIFLLLIVVSLSQA) are cleaved as a signal peptide. Intrachain disulfides connect C39/C77, C73/C120, and C111/C129.

It belongs to the PBP/GOBP family.

Its function is as follows. Present in the aqueous fluid surrounding olfactory sensory dendrites and are thought to aid in the capture and transport of hydrophobic odorants into and through this fluid. This chain is General odorant-binding protein 57a, found in Drosophila melanogaster (Fruit fly).